The following is a 202-amino-acid chain: Syndecan-2 (202 aa).

An N-terminal signal peptide occupies residues 1–18 (MQRAWILLTLGLMACVSA). The Extracellular segment spans residues 19-145 (ETRTELTSDK…HSDNLFKRTE (127 aa)). Residues S41, S55, and S57 are each glycosylated (O-linked (Xyl...) (glycosaminoglycan) serine). Disordered regions lie at residues 41 to 63 (SGVYPIDDDDYSSASGSGADEDI) and 88 to 118 (ETMTLKTQSITPAQTESPEETDKEEVDISEA). A compositionally biased stretch (polar residues) spans 91-103 (TLKTQSITPAQTE). A compositionally biased stretch (acidic residues) spans 104 to 117 (SPEETDKEEVDISE). S116 carries the post-translational modification Phosphoserine. A helical membrane pass occupies residues 146-170 (VLAAVIAGGVIGFLFAIFLILLLVY). Residues 171-202 (RMRKKDEGSYDLGERKPSSAAYQKAPTKEFYA) lie on the Cytoplasmic side of the membrane. The interval 179-202 (SYDLGERKPSSAAYQKAPTKEFYA) is disordered. The residue at position 188 (S188) is a Phosphoserine.

Belongs to the syndecan proteoglycan family. In terms of assembly, interacts (via cytoplasmic domain) with SARM1. Forms a complex with SDCBP and PDCD6IP. In terms of processing, O-glycosylated; contains both heparan sulfate and chondroitin sulfate. Phosphorylated on serine residues. Preferential expression in cells of mesenchymal origin.

Its subcellular location is the membrane. Functionally, cell surface proteoglycan which regulates dendritic arbor morphogenesis. The sequence is that of Syndecan-2 (Sdc2) from Mus musculus (Mouse).